Reading from the N-terminus, the 113-residue chain is Colicin-E1 immunity protein (113 aa).

Functionally, this protein is able to protect a cell, which harbors the plasmid ColE1 encoding colicin E1, against colicin E1. The chain is Colicin-E1 immunity protein (imm) from Escherichia coli.